A 356-amino-acid polypeptide reads, in one-letter code: MDFEIRFLSFYVIQVEGKDEQANKQFKHFQTLDTGEFEESELKDFLDGELKKIVKRKADRHPQSEQVPTKIGHFIVEPGHELDSNPNYNMFNRARLAETKEDFNELSEQFVRTYLDTSAVRGGVFLVASAVPRKYFDESFVFIMKCDFEPKVARISDASSLIKKVEMAITTKNMKSIQYPYMPEEGMVEEGELKIHQASHARYFEDFLKFVEYGESMPEIMKNQVMNMVQEHVYETFEDNSEELKQFEHDIEIWEASEKREIQERLDTHQVIEASAQIIEHTPEAQLKMKVGETEIKGLLADFGDSIHLAKVNGRYVALIEAETISFEKGSSPVEFYKPEGLHEVIERIRNKTEQD.

This is an uncharacterized protein from Bacillus subtilis (strain 168).